We begin with the raw amino-acid sequence, 253 residues long: Neurotrophin-3 (253 aa).

Positions methionine 1 to glycine 18 are cleaved as a signal peptide. Positions asparagine 19–arginine 134 are excised as a propeptide. Residues threonine 62–leucine 89 form a disordered region. Asparagine 127 is a glycosylation site (N-linked (GlcNAc...) asparagine). 3 cysteine pairs are disulfide-bonded: cysteine 148–cysteine 213, cysteine 191–cysteine 242, and cysteine 201–cysteine 244.

It belongs to the NGF-beta family.

The protein localises to the secreted. In terms of biological role, seems to promote the survival of visceral and proprioceptive sensory neurons. The chain is Neurotrophin-3 (NTF3) from Bos taurus (Bovine).